Here is a 437-residue protein sequence, read N- to C-terminus: Adenylosuccinate synthetase (437 aa).

GTP contacts are provided by residues 25 to 31, 53 to 55, and Lys-62; these read GDEGKGK and GHT. Asp-26 serves as the catalytic Proton acceptor. Mg(2+)-binding residues include Asp-26 and Gly-53. IMP contacts are provided by residues 26 to 29 and 51 to 54; these read DEGK and NAGH. The active-site Proton donor is His-54. IMP is bound by residues Thr-141, Arg-155, Asn-232, and Thr-247. A GTP-binding site is contributed by Thr-307. 307–313 lines the substrate pocket; that stretch reads TTTKRPR. Arg-311 serves as a coordination point for IMP. Residues Arg-313, 339–341, and 425–427 contribute to the GTP site; these read KLD and GIG.

This sequence belongs to the adenylosuccinate synthetase family. In terms of assembly, homodimer. The cofactor is Mg(2+).

Its subcellular location is the cytoplasm. It catalyses the reaction IMP + L-aspartate + GTP = N(6)-(1,2-dicarboxyethyl)-AMP + GDP + phosphate + 2 H(+). It participates in purine metabolism; AMP biosynthesis via de novo pathway; AMP from IMP: step 1/2. Plays an important role in the salvage pathway for purine nucleotide biosynthesis. Catalyzes the first committed step in the biosynthesis of AMP from IMP. This is Adenylosuccinate synthetase from Plasmodium vivax (strain Salvador I).